The sequence spans 215 residues: Thiamine-phosphate synthase (215 aa).

4-amino-2-methyl-5-(diphosphooxymethyl)pyrimidine is bound by residues 43–47 (QFRDK) and Asn78. 2 residues coordinate Mg(2+): Asp79 and Asp98. 4-amino-2-methyl-5-(diphosphooxymethyl)pyrimidine is bound at residue Ser117. 143–145 (TNS) contributes to the 2-[(2R,5Z)-2-carboxy-4-methylthiazol-5(2H)-ylidene]ethyl phosphate binding site. 4-amino-2-methyl-5-(diphosphooxymethyl)pyrimidine is bound at residue Lys146. Residues Gly174 and 194–195 (IS) contribute to the 2-[(2R,5Z)-2-carboxy-4-methylthiazol-5(2H)-ylidene]ethyl phosphate site.

Belongs to the thiamine-phosphate synthase family. It depends on Mg(2+) as a cofactor.

The catalysed reaction is 2-[(2R,5Z)-2-carboxy-4-methylthiazol-5(2H)-ylidene]ethyl phosphate + 4-amino-2-methyl-5-(diphosphooxymethyl)pyrimidine + 2 H(+) = thiamine phosphate + CO2 + diphosphate. It catalyses the reaction 2-(2-carboxy-4-methylthiazol-5-yl)ethyl phosphate + 4-amino-2-methyl-5-(diphosphooxymethyl)pyrimidine + 2 H(+) = thiamine phosphate + CO2 + diphosphate. The enzyme catalyses 4-methyl-5-(2-phosphooxyethyl)-thiazole + 4-amino-2-methyl-5-(diphosphooxymethyl)pyrimidine + H(+) = thiamine phosphate + diphosphate. It functions in the pathway cofactor biosynthesis; thiamine diphosphate biosynthesis; thiamine phosphate from 4-amino-2-methyl-5-diphosphomethylpyrimidine and 4-methyl-5-(2-phosphoethyl)-thiazole: step 1/1. Condenses 4-methyl-5-(beta-hydroxyethyl)thiazole monophosphate (THZ-P) and 2-methyl-4-amino-5-hydroxymethyl pyrimidine pyrophosphate (HMP-PP) to form thiamine monophosphate (TMP). This Lactococcus lactis subsp. lactis (strain IL1403) (Streptococcus lactis) protein is Thiamine-phosphate synthase.